Here is a 461-residue protein sequence, read N- to C-terminus: Porin AaxA (461 aa).

The N-terminal stretch at 1 to 22 (MSFRSVLLTALLSLSFTTTMQA) is a signal peptide.

The protein belongs to the OprB family.

The protein resides in the cell outer membrane. Functionally, facilitates L-arginine uptake, as part of the AaxABC system. The arginine uptake by the bacterium in the macrophage may be a virulence factor against the host innate immune response. This chain is Porin AaxA (aaxA), found in Chlamydia trachomatis serovar A (strain ATCC VR-571B / DSM 19440 / HAR-13).